The primary structure comprises 926 residues: Ubiquitin carboxyl-terminal hydrolase 4 (926 aa).

The Rhodanese domain maps to Ser-205 to Val-328. Phosphoserine is present on Ser-443. One can recognise a USP domain in the interval Val-562–Val-923. The active-site Nucleophile is Cys-571. The Proton acceptor role is filled by His-880.

Belongs to the peptidase C19 family. In terms of assembly, interacts with BRO1, RFU1 and VPS32. Associates with the 26S proteasome.

It is found in the cytoplasm. Its subcellular location is the late endosome membrane. The catalysed reaction is Thiol-dependent hydrolysis of ester, thioester, amide, peptide and isopeptide bonds formed by the C-terminal Gly of ubiquitin (a 76-residue protein attached to proteins as an intracellular targeting signal).. With respect to regulation, RFU1 is an inhibitor of deubiquitination activity. Functionally, ubiquitin thioesterase that acts at the late endosome/prevacuolar compartment to recover ubiquitin from ubiquitinated membrane proteins en route to the vacuole. Also removes ubiquitin from soluble proteins targeted to proteasomes. Is essential to maintain a normal level of free ubiquitin. Involved in the ammonium-induced down-regulation of the GAP1 permease and the UME3 destruction in response to oxidative stress. Has a role in the RAD9 checkpoint response to TOP1 poisons. Required for promoting coordination of DNA replication and avoids DNA overreplication. This Saccharomyces cerevisiae (strain RM11-1a) (Baker's yeast) protein is Ubiquitin carboxyl-terminal hydrolase 4 (DOA4).